Here is a 264-residue protein sequence, read N- to C-terminus: Thiazole synthase (264 aa).

K106 functions as the Schiff-base intermediate with DXP in the catalytic mechanism. 1-deoxy-D-xylulose 5-phosphate is bound by residues G167, 193–194, and 215–216; these read AG and NS.

This sequence belongs to the ThiG family. In terms of assembly, homotetramer. Forms heterodimers with either ThiH or ThiS.

The protein localises to the cytoplasm. The enzyme catalyses [ThiS sulfur-carrier protein]-C-terminal-Gly-aminoethanethioate + 2-iminoacetate + 1-deoxy-D-xylulose 5-phosphate = [ThiS sulfur-carrier protein]-C-terminal Gly-Gly + 2-[(2R,5Z)-2-carboxy-4-methylthiazol-5(2H)-ylidene]ethyl phosphate + 2 H2O + H(+). The protein operates within cofactor biosynthesis; thiamine diphosphate biosynthesis. In terms of biological role, catalyzes the rearrangement of 1-deoxy-D-xylulose 5-phosphate (DXP) to produce the thiazole phosphate moiety of thiamine. Sulfur is provided by the thiocarboxylate moiety of the carrier protein ThiS. In vitro, sulfur can be provided by H(2)S. This is Thiazole synthase from Prochlorococcus marinus (strain MIT 9312).